A 291-amino-acid polypeptide reads, in one-letter code: Light-independent protochlorophyllide reductase iron-sulfur ATP-binding protein (291 aa).

Residues 10–15 (GIGKST) and Lys-39 contribute to the ATP site. Ser-14 lines the Mg(2+) pocket. 2 residues coordinate [4Fe-4S] cluster: Cys-95 and Cys-129. 180-181 (NR) is an ATP binding site.

The protein belongs to the NifH/BchL/ChlL family. Homodimer. Protochlorophyllide reductase is composed of three subunits; ChlL, ChlN and ChlB. [4Fe-4S] cluster serves as cofactor.

The protein localises to the plastid. It localises to the chloroplast. The enzyme catalyses chlorophyllide a + oxidized 2[4Fe-4S]-[ferredoxin] + 2 ADP + 2 phosphate = protochlorophyllide a + reduced 2[4Fe-4S]-[ferredoxin] + 2 ATP + 2 H2O. It functions in the pathway porphyrin-containing compound metabolism; chlorophyll biosynthesis (light-independent). Its function is as follows. Component of the dark-operative protochlorophyllide reductase (DPOR) that uses Mg-ATP and reduced ferredoxin to reduce ring D of protochlorophyllide (Pchlide) to form chlorophyllide a (Chlide). This reaction is light-independent. The L component serves as a unique electron donor to the NB-component of the complex, and binds Mg-ATP. The sequence is that of Light-independent protochlorophyllide reductase iron-sulfur ATP-binding protein from Pinus koraiensis (Korean pine).